Reading from the N-terminus, the 749-residue chain is DNA topoisomerase 1 (749 aa).

Positions 1–110 (MSDSEDVALS…PKKEDSVETD (110 aa)) are disordered. A compositionally biased stretch (basic and acidic residues) spans 62 to 75 (LSKEKVNNKVKDEL). Over residues 79 to 94 (PVTPKKTPKISKTPVS) the composition is skewed to low complexity. Basic and acidic residues predominate over residues 101–110 (PKKEDSVETD). Interaction with DNA stretches follow at residues 338-339 (KY), 401-406 (RAGGEK), and 493-495 (TAK). One can recognise a Topo IB-type catalytic domain in the interval 345 to 749 (NSSIKGISDM…IESTDENWRF (405 aa)). The O-(3'-phospho-DNA)-tyrosine intermediate role is filled by Tyr-707.

This sequence belongs to the type IB topoisomerase family.

It is found in the nucleus. The protein resides in the nucleolus. Its subcellular location is the nucleoplasm. The catalysed reaction is ATP-independent breakage of single-stranded DNA, followed by passage and rejoining.. Its function is as follows. Releases the supercoiling and torsional tension of DNA introduced during the DNA replication and transcription by transiently cleaving and rejoining one strand of the DNA duplex. Introduces a single-strand break via transesterification at the specific target site 5'-[CT]CCTTp site in duplex DNA. The scissile phosphodiester is attacked by the catalytic tyrosine of the enzyme, resulting in the formation of a DNA-(3'-phosphotyrosyl)-enzyme intermediate and the expulsion of a 5'-OH DNA strand. The free DNA strand then undergoes passage around the unbroken strand thus removing DNA supercoils. Finally, in the religation step, the DNA 5'-OH attacks the covalent intermediate to expel the active-site tyrosine and restore the DNA phosphodiester backbone. The chain is DNA topoisomerase 1 (TOP1) from Candidozyma auris (Yeast).